The sequence spans 161 residues: Regulator of ribonuclease activity A (161 aa).

This sequence belongs to the RraA family. Homotrimer. Binds to both RNA-binding sites in the C-terminal region of Rne and to RhlB.

The protein localises to the cytoplasm. Its function is as follows. Globally modulates RNA abundance by binding to RNase E (Rne) and regulating its endonucleolytic activity. Can modulate Rne action in a substrate-dependent manner by altering the composition of the degradosome. Modulates RNA-binding and helicase activities of the degradosome. The chain is Regulator of ribonuclease activity A from Shewanella denitrificans (strain OS217 / ATCC BAA-1090 / DSM 15013).